The primary structure comprises 324 residues: tRNA N6-adenosine threonylcarbamoyltransferase (324 aa).

Residues His-107, His-111, and Tyr-127 each coordinate Fe cation. Substrate contacts are provided by residues 127 to 131 (YVSGG), Asp-159, Gly-172, Glu-176, and Asn-257. Asp-285 provides a ligand contact to Fe cation.

Belongs to the KAE1 / TsaD family. As to quaternary structure, monomer. Component of the KEOPS complex that consists of Kae1, Bud32, Cgi121 and Pcc1; the whole complex dimerizes. The cofactor is Fe(2+).

The protein localises to the cytoplasm. The catalysed reaction is L-threonylcarbamoyladenylate + adenosine(37) in tRNA = N(6)-L-threonylcarbamoyladenosine(37) in tRNA + AMP + H(+). In terms of biological role, required for the formation of a threonylcarbamoyl group on adenosine at position 37 (t(6)A37) in tRNAs that read codons beginning with adenine. Is a component of the KEOPS complex that is probably involved in the transfer of the threonylcarbamoyl moiety of threonylcarbamoyl-AMP (TC-AMP) to the N6 group of A37. Kae1 likely plays a direct catalytic role in this reaction, but requires other protein(s) of the complex to fulfill this activity. In vitro, binds tRNA, ssRNA, both single- and double-stranded DNA, and exhibits a low ATPase activity. In Pyrococcus abyssi (strain GE5 / Orsay), this protein is tRNA N6-adenosine threonylcarbamoyltransferase.